A 378-amino-acid chain; its full sequence is Anhydro-N-acetylmuramic acid kinase (378 aa).

9 to 16 contacts ATP; sequence GTSADGID.

The protein belongs to the anhydro-N-acetylmuramic acid kinase family.

The enzyme catalyses 1,6-anhydro-N-acetyl-beta-muramate + ATP + H2O = N-acetyl-D-muramate 6-phosphate + ADP + H(+). The protein operates within amino-sugar metabolism; 1,6-anhydro-N-acetylmuramate degradation. It functions in the pathway cell wall biogenesis; peptidoglycan recycling. In terms of biological role, catalyzes the specific phosphorylation of 1,6-anhydro-N-acetylmuramic acid (anhMurNAc) with the simultaneous cleavage of the 1,6-anhydro ring, generating MurNAc-6-P. Is required for the utilization of anhMurNAc either imported from the medium or derived from its own cell wall murein, and thus plays a role in cell wall recycling. The sequence is that of Anhydro-N-acetylmuramic acid kinase from Prochlorococcus marinus (strain NATL1A).